The chain runs to 300 residues: UDP-N-acetylenolpyruvoylglucosamine reductase (300 aa).

Residues 30-194 (KVGGPADFFA…LAAVFSLAAG (165 aa)) form the FAD-binding PCMH-type domain. Residue arginine 174 is part of the active site. Serine 223 functions as the Proton donor in the catalytic mechanism. The active site involves glutamate 293.

Belongs to the MurB family. FAD serves as cofactor.

Its subcellular location is the cytoplasm. It carries out the reaction UDP-N-acetyl-alpha-D-muramate + NADP(+) = UDP-N-acetyl-3-O-(1-carboxyvinyl)-alpha-D-glucosamine + NADPH + H(+). It functions in the pathway cell wall biogenesis; peptidoglycan biosynthesis. In terms of biological role, cell wall formation. The polypeptide is UDP-N-acetylenolpyruvoylglucosamine reductase (Geotalea uraniireducens (strain Rf4) (Geobacter uraniireducens)).